Reading from the N-terminus, the 505-residue chain is Peroxisome proliferator-activated receptor gamma (505 aa).

Residue T84 is glycosylated (O-linked (GlcNAc) threonine). S112 is modified (phosphoserine; by MAPK). Positions 136 to 210 form a DNA-binding region, nuclear receptor; it reads AIECRVCGDK…VGMSHNAIRF (75 aa). NR C4-type zinc fingers lie at residues 139-159 and 176-198; these read CRVC…CEGC and CDLN…FQKC. The segment at 205-280 is interaction with FAM120B; it reads HNAIRFGRMP…DKSPFVIYDM (76 aa). The 266-residue stretch at 238 to 503 folds into the NR LBD domain; it reads DLRALAKHLY…HPLLQEIYKD (266 aa). K252 participates in a covalent cross-link: Glycyl lysine isopeptide (Lys-Gly) (interchain with G-Cter in ubiquitin). A 9aaTAD motif is present at residues 495–503; it reads PLLQEIYKD.

The protein belongs to the nuclear hormone receptor family. NR1 subfamily. In terms of assembly, interacts with FOXO1 (acetylated form). Heterodimer with other nuclear receptors, such as RXRA. The heterodimer with the retinoic acid receptor RXRA is called adipocyte-specific transcription factor ARF6. Interacts with NCOA6 coactivator, leading to a strong increase in transcription of target genes. Interacts with coactivator PPARBP, leading to a mild increase in transcription of target genes. Interacts with NOCA7 in a ligand-inducible manner. Interacts with NCOA1 and NCOA2 LXXLL motifs. Interacts with ASXL1, ASXL2, DNTTIP2, FAM120B, MAP2K1/MEK1, NR0B2, PDPK1, PRDM16, PRMT2 and TGFB1I1. Interacts (when activated by agonist) with PPP5C. Interacts with HELZ2 and THRAP3; the interaction stimulates the transcriptional activity of PPARG. Interacts with PER2, the interaction is ligand dependent and blocks PPARG recruitment to target promoters. Interacts with NOCT. Interacts with ACTN4. Interacts (when in the liganded conformation) with GPS2. Interacts with CRY1 and CRY2 in a ligand-dependent manner. In the absence of hormonal ligand, interacts with TACC1. In macrophages, interacts with PAQR3 and STUB1; the interactions promote PPARG poylubiquitination and STUB1-mediated degradation. In terms of processing, O-GlcNAcylation at Thr-84 reduces transcriptional activity in adipocytes. Phosphorylated at basal conditions and dephosphorylated when treated with the ligand. May be dephosphorylated by PPP5C. The phosphorylated form may be inactive and dephosphorylation induces adipogenic activity. Post-translationally, ubiquitinated by E3 ubiquitin-protein ligase complex containing FBXO9; leading to proteasomal degradation. Ubiquitinated at Lys-252 by TRIM55 leading to proteasomal degradation. Ubiquitinated by E3 ubiquitin-protein ligase STUB1/CHIP; leading to proteasomal degradation. Highest expression in adipose tissue. Lower in liver, heart, kidney, stomach, duodenum and colon.

Its subcellular location is the nucleus. It is found in the cytoplasm. PDPK1 activates its transcriptional activity independently of its kinase activity. Functionally, nuclear receptor that binds peroxisome proliferators such as hypolipidemic drugs and fatty acids. Once activated by a ligand, the nuclear receptor binds to DNA specific PPAR response elements (PPRE) and modulates the transcription of its target genes, such as acyl-CoA oxidase. It therefore controls the peroxisomal beta-oxidation pathway of fatty acids. Key regulator of adipocyte differentiation and glucose homeostasis. ARF6 acts as a key regulator of the tissue-specific adipocyte P2 (aP2) enhancer. Acts as a critical regulator of gut homeostasis by suppressing NF-kappa-B-mediated pro-inflammatory responses. Plays a role in the regulation of cardiovascular circadian rhythms by regulating the transcription of BMAL1 in the blood vessels. This is Peroxisome proliferator-activated receptor gamma (PPARG) from Macaca mulatta (Rhesus macaque).